We begin with the raw amino-acid sequence, 690 residues long: Eukaryotic translation initiation factor 3 subunit B (690 aa).

Basic and acidic residues predominate over residues 1-11; it reads MAKKKSEDHSG. Positions 1–37 are disordered; it reads MAKKKSEDHSGGDANDSDYNEEPNFEDPPNFVDNISD. The span at 15–25 shows a compositional bias: acidic residues; the sequence is NDSDYNEEPNF. An RRM domain is found at 57–141; that stretch reads SVVVVDNIPK…HTFAVNLFTD (85 aa). WD repeat units lie at residues 207–246, 247–289, 293–331, 334–369, 442–484, and 530–575; these read TRER…KIQK, FPHT…EKRS, DGMS…LLDL, IKIP…TLME, EIRE…KPSL, and PDHF…IKRT. Residues 614 to 645 adopt a coiled-coil conformation; sequence QKDRLRLTRASKELLEKRSQLRETFMEYRNKR.

It belongs to the eIF-3 subunit B family. As to quaternary structure, component of the eukaryotic translation initiation factor 3 (eIF-3) complex. The eIF-3 complex interacts with pix. Interacts with mxt.

It is found in the cytoplasm. Its function is as follows. RNA-binding component of the eukaryotic translation initiation factor 3 (eIF-3) complex, which is involved in protein synthesis of a specialized repertoire of mRNAs and, together with other initiation factors, stimulates binding of mRNA and methionyl-tRNAi to the 40S ribosome. The eIF-3 complex specifically targets and initiates translation of a subset of mRNAs involved in cell proliferation. The sequence is that of Eukaryotic translation initiation factor 3 subunit B from Drosophila pseudoobscura pseudoobscura (Fruit fly).